Here is a 592-residue protein sequence, read N- to C-terminus: Bifunctional dolabella-3,7-dien-18-ol synthase/dolathalia-3,7,11-triene synthase TPS20, chloroplastic (592 aa).

Residues methionine 1–asparagine 52 constitute a chloroplast transit peptide. Aspartate 349, aspartate 353, aspartate 491, threonine 495, and glutamate 499 together coordinate Mg(2+). A DDXXD motif motif is present at residues aspartate 349 to aspartate 353.

It belongs to the terpene synthase family. Tpsa subfamily. Mg(2+) serves as cofactor. Requires Mn(2+) as cofactor.

The protein resides in the plastid. Its subcellular location is the chloroplast. It catalyses the reaction (2E,6E,10E)-geranylgeranyl diphosphate + H2O = (3E,7E)-dolabella-3,7-dien-18-ol + diphosphate. The catalysed reaction is (2E,6E,10E)-geranylgeranyl diphosphate = (3E,7E)-dolathalia-3,7,11-triene + diphosphate. Its pathway is secondary metabolite biosynthesis; terpenoid biosynthesis. Functionally, involved in the biosynthesis of diterpenes in roots. Possesses dolabella-3,7-dien-18-ol synthase activity and dolathalia-3,7,11-triene synthase activity in vitro. Catalyzes the formation of dolabella-3,7-dien-18-ol and dolathalia-3,7,11-triene from geranygeranyl diphosphate (GGPP). Does not seem to be involved in sesquiterpene biosynthesis. The chain is Bifunctional dolabella-3,7-dien-18-ol synthase/dolathalia-3,7,11-triene synthase TPS20, chloroplastic from Arabidopsis thaliana (Mouse-ear cress).